Here is a 169-residue protein sequence, read N- to C-terminus: Peptide deformylase (169 aa).

Residues cysteine 91 and histidine 133 each coordinate Fe cation. Glutamate 134 is a catalytic residue. Residue histidine 137 coordinates Fe cation.

This sequence belongs to the polypeptide deformylase family. Requires Fe(2+) as cofactor.

The catalysed reaction is N-terminal N-formyl-L-methionyl-[peptide] + H2O = N-terminal L-methionyl-[peptide] + formate. Removes the formyl group from the N-terminal Met of newly synthesized proteins. Requires at least a dipeptide for an efficient rate of reaction. N-terminal L-methionine is a prerequisite for activity but the enzyme has broad specificity at other positions. This is Peptide deformylase from Salmonella typhi.